The sequence spans 305 residues: Ribonuclease BN (305 aa).

Histidine 63, histidine 65, aspartate 67, histidine 68, histidine 141, aspartate 212, and histidine 270 together coordinate Zn(2+). Catalysis depends on aspartate 67, which acts as the Proton acceptor.

This sequence belongs to the RNase Z family. RNase BN subfamily. As to quaternary structure, homodimer. The cofactor is Zn(2+).

Zinc phosphodiesterase, which has both exoribonuclease and endoribonuclease activities. The sequence is that of Ribonuclease BN from Proteus mirabilis (strain HI4320).